Reading from the N-terminus, the 601-residue chain is Elongation factor 4 (601 aa).

Residues 8-189 (EQIRNFGIIA…LIVRKAPPPK (182 aa)) enclose the tr-type G domain. 20-25 (DHGKST) contributes to the GTP binding site.

Belongs to the TRAFAC class translation factor GTPase superfamily. Classic translation factor GTPase family. LepA subfamily.

Its subcellular location is the cell membrane. The catalysed reaction is GTP + H2O = GDP + phosphate + H(+). Functionally, required for accurate and efficient protein synthesis under certain stress conditions. May act as a fidelity factor of the translation reaction, by catalyzing a one-codon backward translocation of tRNAs on improperly translocated ribosomes. Back-translocation proceeds from a post-translocation (POST) complex to a pre-translocation (PRE) complex, thus giving elongation factor G a second chance to translocate the tRNAs correctly. Binds to ribosomes in a GTP-dependent manner. This is Elongation factor 4 from Tropheryma whipplei (strain Twist) (Whipple's bacillus).